Consider the following 421-residue polypeptide: CinA-like protein (421 aa).

The protein belongs to the CinA family.

This Mycobacterium sp. (strain MCS) protein is CinA-like protein.